The chain runs to 297 residues: Adrenocorticotropic hormone receptor (297 aa).

At 1–23 (MKHITDLYESVNSTMSNKSDCPP) the chain is on the extracellular side. N-linked (GlcNAc...) asparagine glycans are attached at residues Asn12 and Asn17. Intrachain disulfides connect Cys21–Cys253 and Cys245–Cys251. The helical transmembrane segment at 24–49 (VVLPEEVFFTISVIGVLENLIVLLAV) threads the bilayer. Residues 50–58 (IKNKNLQSP) are Cytoplasmic-facing. The chain crosses the membrane as a helical span at residues 59-79 (MYFFICSLAISDMLGSLYKIL). The Extracellular portion of the chain corresponds to 80–104 (ENILIIFRNMGYLEPRGGFESTADD). Residues 105 to 126 (VVDSLFILSLLGSICSLSAIAA) traverse the membrane as a helical segment. Residues 127–147 (DRYITIFHALQYQRLVTPRRA) lie on the Cytoplasmic side of the membrane. The helical transmembrane segment at 148–168 (AVVLLIIWACCIGSGITIVTF) threads the bilayer. Residues 169-180 (SHHVPAVIAFTA) are Extracellular-facing. A helical transmembrane segment spans residues 181 to 199 (LFPLMLVFILCLYGHMFLL). Residues 200-217 (ARSHARRVSTLPRANMKG) lie on the Cytoplasmic side of the membrane. Residues 218-244 (AITLTVLLGVFIFCWAPFVLHILLMTF) traverse the membrane as a helical segment. The Extracellular segment spans residues 245–256 (CPADPYCACYLA). A helical transmembrane segment spans residues 257-278 (LFQVNAVLIMCNAIIDPFIYAF). At 279-297 (RSPELRDAFKKMIICKRYP) the chain is on the cytoplasmic side. Cys293 is lipidated: S-palmitoyl cysteine.

It belongs to the G-protein coupled receptor 1 family. Homodimer. Interacts with corticotropin (ACTH). Interacts with MRAP; this interaction targets MC2R to the plasma membrane. Interacts with MRAP2; competing with MRAP for binding to MC2R and impairing the binding of corticotropin (ACTH). Post-translationally, ubiquitinated by MGRN1 that may be involved in post-endocytic trafficking and/or degradation of internalized receptor. As to expression, expressed in skin and adrenal gland tissues.

The protein localises to the cell membrane. Functionally, hormone receptor primarily expressed in adrenal cortex that plays a key role in regulating adrenocortical function. Upon corticotropin (ACTH) binding, facilitates the release of adrenal glucocorticoids, including cortisol and corticosterone. In addition, MC2R is required for fetal and neonatal adrenal gland development. Mechanistically, activates adenylate cyclase (cAMP), the MAPK cascade as well as the cAMP-dependent protein kinase A pathway leading to steroidogenic factor 1/NR5A1-mediated transcriptional activation. This is Adrenocorticotropic hormone receptor (MC2R) from Sus scrofa (Pig).